Consider the following 377-residue polypeptide: Chaperone protein DnaJ (377 aa).

Residues aspartate 3–glycine 67 enclose the J domain. A CR-type zinc finger spans residues glycine 133–arginine 215. Cysteine 146, cysteine 149, cysteine 163, cysteine 166, cysteine 189, cysteine 192, cysteine 203, and cysteine 206 together coordinate Zn(2+). CXXCXGXG motif repeat units follow at residues cysteine 146–glycine 153, cysteine 163–glycine 170, cysteine 189–glycine 196, and cysteine 203–glycine 210.

It belongs to the DnaJ family. Homodimer. The cofactor is Zn(2+).

The protein resides in the cytoplasm. In terms of biological role, participates actively in the response to hyperosmotic and heat shock by preventing the aggregation of stress-denatured proteins and by disaggregating proteins, also in an autonomous, DnaK-independent fashion. Unfolded proteins bind initially to DnaJ; upon interaction with the DnaJ-bound protein, DnaK hydrolyzes its bound ATP, resulting in the formation of a stable complex. GrpE releases ADP from DnaK; ATP binding to DnaK triggers the release of the substrate protein, thus completing the reaction cycle. Several rounds of ATP-dependent interactions between DnaJ, DnaK and GrpE are required for fully efficient folding. Also involved, together with DnaK and GrpE, in the DNA replication of plasmids through activation of initiation proteins. In Parasynechococcus marenigrum (strain WH8102), this protein is Chaperone protein DnaJ.